Here is a 281-residue protein sequence, read N- to C-terminus: Small ribosomal subunit biogenesis GTPase RsgA (281 aa).

In terms of domain architecture, CP-type G spans 59-212; sequence QNEFIRPKVA…LIDTPGFSSL (154 aa). GTP is bound by residues 108–111 and 155–163; these read TKAD and GQSGVGKTT. C235, C240, H242, and C250 together coordinate Zn(2+).

This sequence belongs to the TRAFAC class YlqF/YawG GTPase family. RsgA subfamily. Monomer. Associates with 30S ribosomal subunit, binds 16S rRNA. Zn(2+) serves as cofactor.

The protein localises to the cytoplasm. In terms of biological role, one of several proteins that assist in the late maturation steps of the functional core of the 30S ribosomal subunit. Helps release RbfA from mature subunits. May play a role in the assembly of ribosomal proteins into the subunit. Circularly permuted GTPase that catalyzes slow GTP hydrolysis, GTPase activity is stimulated by the 30S ribosomal subunit. The sequence is that of Small ribosomal subunit biogenesis GTPase RsgA from Mycoplasmopsis agalactiae (strain NCTC 10123 / CIP 59.7 / PG2) (Mycoplasma agalactiae).